Reading from the N-terminus, the 144-residue chain is Large ribosomal subunit protein uL15 (144 aa).

The interval 1-57 is disordered; sequence MELNNLKPAEGSKHAKRRVGRGIGSGLGKTAGRGHKGQKSRSGGFHKVGFEGGQMPL. A compositionally biased stretch (gly residues) spans 21 to 31; it reads RGIGSGLGKTA.

Belongs to the universal ribosomal protein uL15 family. As to quaternary structure, part of the 50S ribosomal subunit.

Binds to the 23S rRNA. The polypeptide is Large ribosomal subunit protein uL15 (Paraburkholderia phytofirmans (strain DSM 17436 / LMG 22146 / PsJN) (Burkholderia phytofirmans)).